Reading from the N-terminus, the 373-residue chain is GPN-loop GTPase 1 (373 aa).

The residue at position 2 (A2) is an N-acetylalanine. G29–T34 is a binding site for GTP. A Gly-Pro-Asn (GPN)-loop; involved in dimer interface motif is present at residues G86–N88. Residue N189–D192 participates in GTP binding. A phosphoserine mark is found at S301, S312, and S314. Residues L304–K373 form a disordered region. T328 carries the phosphothreonine modification. The segment covering D330–D342 has biased composition (acidic residues). S338 is modified (phosphoserine). T340 bears the Phosphothreonine mark. The segment covering I343 to P355 has biased composition (basic and acidic residues).

This sequence belongs to the GPN-loop GTPase family. As to quaternary structure, heterodimer with GPN3. Binds to RNA polymerase II (RNAPII). Interacts directly with RNAPII subunits RPB4 and RPB7 and the CTD of RPB1. Interacts with XPA.

The protein resides in the cytoplasm. It is found in the nucleus. Its function is as follows. Small GTPase required for proper nuclear import of RNA polymerase II (RNAPII). May act at an RNAP assembly step prior to nuclear import. Forms an interface between the RNA polymerase II enzyme and chaperone/scaffolding proteins, suggesting that it is required to connect RNA polymerase II to regulators of protein complex formation. May be involved in nuclear localization of XPA. This chain is GPN-loop GTPase 1, found in Bos taurus (Bovine).